The following is a 278-amino-acid chain: S-formylglutathione hydrolase YeiG (278 aa).

Catalysis depends on charge relay system residues Ser145, Asp223, and His256.

Belongs to the esterase D family.

It catalyses the reaction S-formylglutathione + H2O = formate + glutathione + H(+). Serine hydrolase involved in the detoxification of formaldehyde. Hydrolyzes S-formylglutathione to glutathione and formate. This Escherichia coli O157:H7 protein is S-formylglutathione hydrolase YeiG (yeiG).